Consider the following 205-residue polypeptide: MFLRHVIVFSLIALLTGCAGLTSREAVQGKGDPAQWREHKQQLSSLDGWQINGKVGIRAPKDSGSGTLFWLQRQDYYDIRLSGPLGRGAARLTGRPGAVVLEVANQGRYEATSPESLLQDQLGWKLPVSHLVWWVRGLPAPDSKSNVTLDGDSRLASLEQDGWQVEYLSYVEQNGYWLPERVKLHGQDLDVTLVIKDWQPRKLGQ.

A signal peptide spans 1–17 (MFLRHVIVFSLIALLTG). Cys-18 carries N-palmitoyl cysteine lipidation. Cys-18 carries S-diacylglycerol cysteine lipidation.

The protein belongs to the LolB family. Monomer.

It is found in the cell outer membrane. In terms of biological role, plays a critical role in the incorporation of lipoproteins in the outer membrane after they are released by the LolA protein. This Pseudomonas syringae pv. syringae (strain B728a) protein is Outer-membrane lipoprotein LolB.